A 179-amino-acid chain; its full sequence is Large ribosomal subunit protein uL6 (179 aa).

Belongs to the universal ribosomal protein uL6 family. In terms of assembly, part of the 50S ribosomal subunit.

In terms of biological role, this protein binds to the 23S rRNA, and is important in its secondary structure. It is located near the subunit interface in the base of the L7/L12 stalk, and near the tRNA binding site of the peptidyltransferase center. This is Large ribosomal subunit protein uL6 from Bacillus subtilis (strain 168).